Consider the following 217-residue polypeptide: KS1 protein (217 aa).

The signal sequence occupies residues 1–16 (MKLIIVLVMMLVCVYS). The segment covering 24 to 47 (PKNHEVPAKKQFAETKVEKKKRSD) has biased composition (basic and acidic residues). Disordered stretches follow at residues 24 to 58 (PKNHEVPAKKQFAETKVEKKKRSDDGDEEICDDDD) and 72 to 205 (EDDD…LKIK). Tandem repeats lie at residues 32-81 (KKQF…VDGG) and 98-147 (KKKK…YDED). Residues 32–147 (KKQFAETKVE…EEDDDCYDED (116 aa)) form a 2 X 50 AA approximate repeats region. 2 stretches are compositionally biased toward acidic residues: residues 48 to 58 (DGDEEICDDDD) and 72 to 94 (EDDDDCVDGGETEECDEDDDDCQ). Residues 98-110 (KKKKRETKPKLKK) show a composition bias toward basic residues. Residues 114 to 145 (DEEEEECEEDDEDCEVEVDIEECDEEDDDCYD) are compositionally biased toward acidic residues. A compositionally biased stretch (basic residues) spans 149–188 (KKKKENKLKKESKKKNSKKTVPKNAKKSSKRSTSTKKTSQ).

As to expression, expressed in tentacle-specific epithelial cells (battery cells) as well as in a small fraction of ectodermal epithelial cells in the gastric region subjacent to the tentacles (the tentacle formation region). The later cells are committed to become battery cells.

Responds to early signals of head formation in hydra. This is KS1 protein (KS1) from Hydra vulgaris (Hydra).